The following is an 828-amino-acid chain: Leucine--tRNA ligase (828 aa).

The 'HIGH' region motif lies at 36-46 (PYPSGKIHIGH). The 'KMSKS' region signature appears at 595–599 (KMSKS). K598 provides a ligand contact to ATP.

The protein belongs to the class-I aminoacyl-tRNA synthetase family.

It localises to the cytoplasm. It catalyses the reaction tRNA(Leu) + L-leucine + ATP = L-leucyl-tRNA(Leu) + AMP + diphosphate. The polypeptide is Leucine--tRNA ligase (Rickettsia typhi (strain ATCC VR-144 / Wilmington)).